Here is a 380-residue protein sequence, read N- to C-terminus: Anhydro-N-acetylmuramic acid kinase (380 aa).

17–24 contributes to the ATP binding site; it reads GTSMDGAD.

Belongs to the anhydro-N-acetylmuramic acid kinase family.

It carries out the reaction 1,6-anhydro-N-acetyl-beta-muramate + ATP + H2O = N-acetyl-D-muramate 6-phosphate + ADP + H(+). It participates in amino-sugar metabolism; 1,6-anhydro-N-acetylmuramate degradation. Its pathway is cell wall biogenesis; peptidoglycan recycling. Functionally, catalyzes the specific phosphorylation of 1,6-anhydro-N-acetylmuramic acid (anhMurNAc) with the simultaneous cleavage of the 1,6-anhydro ring, generating MurNAc-6-P. Is required for the utilization of anhMurNAc either imported from the medium or derived from its own cell wall murein, and thus plays a role in cell wall recycling. The protein is Anhydro-N-acetylmuramic acid kinase of Cupriavidus metallidurans (strain ATCC 43123 / DSM 2839 / NBRC 102507 / CH34) (Ralstonia metallidurans).